A 292-amino-acid polypeptide reads, in one-letter code: Phosphoenolpyruvate guanylyltransferase (292 aa).

Residues Thr-168, Gly-184, and Ser-187 each contribute to the phosphoenolpyruvate site. A disordered region spans residues 243–292 (PLVAEDSGGSGGESGTSAESGLSVPPGIVGGTQRRIVSDASGPGRAKKYP).

Belongs to the CofC family.

It catalyses the reaction phosphoenolpyruvate + GTP + H(+) = enolpyruvoyl-2-diphospho-5'-guanosine + diphosphate. The protein operates within cofactor biosynthesis; coenzyme F420 biosynthesis. Its function is as follows. Guanylyltransferase that catalyzes the activation of phosphoenolpyruvate (PEP) as enolpyruvoyl-2-diphospho-5'-guanosine, via the condensation of PEP with GTP. It is involved in the biosynthesis of coenzyme F420, a hydride carrier cofactor. The sequence is that of Phosphoenolpyruvate guanylyltransferase from Frankia casuarinae (strain DSM 45818 / CECT 9043 / HFP020203 / CcI3).